Here is a 295-residue protein sequence, read N- to C-terminus: ATP synthase gamma chain (295 aa).

Belongs to the ATPase gamma chain family. F-type ATPases have 2 components, CF(1) - the catalytic core - and CF(0) - the membrane proton channel. CF(1) has five subunits: alpha(3), beta(3), gamma(1), delta(1), epsilon(1). CF(0) has three main subunits: a, b and c.

It is found in the cell inner membrane. In terms of biological role, produces ATP from ADP in the presence of a proton gradient across the membrane. The gamma chain is believed to be important in regulating ATPase activity and the flow of protons through the CF(0) complex. In Bdellovibrio bacteriovorus (strain ATCC 15356 / DSM 50701 / NCIMB 9529 / HD100), this protein is ATP synthase gamma chain.